Consider the following 270-residue polypeptide: NAD(P)H-hydrate epimerase (270 aa).

Residues 25-234 enclose the YjeF N-terminal domain; it reads FQQLMDLMQN…DLLAPEEIYQ (210 aa). A (6S)-NADPHX-binding site is contributed by 73–77; the sequence is DNGGQ. Positions 74 and 144 each coordinate K(+). Residues 148–154 and E177 contribute to the (6S)-NADPHX site; that span reads GVGLYGH. T180 is a binding site for K(+).

This sequence belongs to the NnrE/AIBP family. It depends on K(+) as a cofactor.

It carries out the reaction (6R)-NADHX = (6S)-NADHX. The catalysed reaction is (6R)-NADPHX = (6S)-NADPHX. In terms of biological role, catalyzes the epimerization of the S- and R-forms of NAD(P)HX, a damaged form of NAD(P)H that is a result of enzymatic or heat-dependent hydration. This is a prerequisite for the S-specific NAD(P)H-hydrate dehydratase to allow the repair of both epimers of NAD(P)HX. In Legionella pneumophila (strain Paris), this protein is NAD(P)H-hydrate epimerase.